A 160-amino-acid chain; its full sequence is Large ribosomal subunit protein bL17 (160 aa).

Basic and acidic residues predominate over residues 123–141 (DEKRQKRAEARAKRREEMQ). The disordered stretch occupies residues 123-160 (DEKRQKRAEARAKRREEMQKAMAEQQQAEGGEPEGGNE). The segment covering 142–152 (KAMAEQQQAEG) has biased composition (low complexity).

The protein belongs to the bacterial ribosomal protein bL17 family. As to quaternary structure, part of the 50S ribosomal subunit. Contacts protein L32.

The chain is Large ribosomal subunit protein bL17 from Acidobacterium capsulatum (strain ATCC 51196 / DSM 11244 / BCRC 80197 / JCM 7670 / NBRC 15755 / NCIMB 13165 / 161).